Consider the following 472-residue polypeptide: 3-isopropylmalate dehydratase large subunit (472 aa).

[4Fe-4S] cluster-binding residues include Cys347, Cys409, and Cys412.

The protein belongs to the aconitase/IPM isomerase family. LeuC type 1 subfamily. Heterodimer of LeuC and LeuD. It depends on [4Fe-4S] cluster as a cofactor.

The catalysed reaction is (2R,3S)-3-isopropylmalate = (2S)-2-isopropylmalate. The protein operates within amino-acid biosynthesis; L-leucine biosynthesis; L-leucine from 3-methyl-2-oxobutanoate: step 2/4. Functionally, catalyzes the isomerization between 2-isopropylmalate and 3-isopropylmalate, via the formation of 2-isopropylmaleate. The protein is 3-isopropylmalate dehydratase large subunit of Salinibacter ruber (strain DSM 13855 / M31).